Consider the following 115-residue polypeptide: Large ribosomal subunit protein uL24 (115 aa).

Belongs to the universal ribosomal protein uL24 family. As to quaternary structure, part of the 50S ribosomal subunit.

Its function is as follows. One of two assembly initiator proteins, it binds directly to the 5'-end of the 23S rRNA, where it nucleates assembly of the 50S subunit. One of the proteins that surrounds the polypeptide exit tunnel on the outside of the subunit. In Deinococcus deserti (strain DSM 17065 / CIP 109153 / LMG 22923 / VCD115), this protein is Large ribosomal subunit protein uL24.